The following is a 267-amino-acid chain: Protein HesA, heterocyst (267 aa).

It belongs to the HesA/MoeB/ThiF family.

This is Protein HesA, heterocyst (hesA1) from Trichormus variabilis (strain ATCC 29413 / PCC 7937) (Anabaena variabilis).